The sequence spans 139 residues: D-ribose pyranase (139 aa).

The Proton donor role is filled by histidine 20. Substrate contacts are provided by residues aspartate 28, histidine 106, and 128 to 130; that span reads YAN.

This sequence belongs to the RbsD / FucU family. RbsD subfamily. As to quaternary structure, homodecamer.

It localises to the cytoplasm. The enzyme catalyses beta-D-ribopyranose = beta-D-ribofuranose. Its pathway is carbohydrate metabolism; D-ribose degradation; D-ribose 5-phosphate from beta-D-ribopyranose: step 1/2. In terms of biological role, catalyzes the interconversion of beta-pyran and beta-furan forms of D-ribose. This chain is D-ribose pyranase, found in Photorhabdus laumondii subsp. laumondii (strain DSM 15139 / CIP 105565 / TT01) (Photorhabdus luminescens subsp. laumondii).